An 88-amino-acid chain; its full sequence is Sec-independent protein translocase protein TatA (88 aa).

Residues 1-21 form a helical membrane-spanning segment; it reads MGSLSPWHWAILAVVVIVLFG. A compositionally biased stretch (basic and acidic residues) spans 43–52; it reads MREMQSETKA. The disordered stretch occupies residues 43–88; that stretch reads MREMQSETKAEPSAIETNTANPTPVQSQRIDPAAATGQDQTEARPA. Positions 57–71 are enriched in polar residues; sequence IETNTANPTPVQSQR.

Belongs to the TatA/E family. The Tat system comprises two distinct complexes: a TatABC complex, containing multiple copies of TatA, TatB and TatC subunits, and a separate TatA complex, containing only TatA subunits. Substrates initially bind to the TatABC complex, which probably triggers association of the separate TatA complex to form the active translocon.

Its subcellular location is the cell membrane. Its function is as follows. Part of the twin-arginine translocation (Tat) system that transports large folded proteins containing a characteristic twin-arginine motif in their signal peptide across membranes. TatA could form the protein-conducting channel of the Tat system. This is Sec-independent protein translocase protein TatA from Mycobacterium marinum (strain ATCC BAA-535 / M).